The sequence spans 1326 residues: Paired amphipathic helix protein Sin3-like 4 (1326 aa).

PAH domains lie at 8 to 78, 95 to 165, and 292 to 367; these read QKLT…LPKG, KPVE…LPDT, and IPSS…LAQC. Disordered stretches follow at residues 272–299, 715–812, 844–864, and 927–1000; these read DDDS…STYD, VPSR…RAET, SVAG…TEEL, and SKSK…EGDM. Basic and acidic residues predominate over residues 721-737; it reads GAEDREDAVKSTNHDRE. 4 stretches are compositionally biased toward polar residues: residues 744–757, 781–805, 844–861, and 942–961; these read SPQN…SMRS, SSKT…NLTT, SVAG…TSGT, and PRSS…SGTD. Positions 967 to 981 are enriched in basic and acidic residues; that stretch reads DCYREDDIDHNKVES.

It localises to the nucleus. In terms of biological role, acts as a transcriptional repressor. Plays roles in regulating gene expression and genome stability. This is Paired amphipathic helix protein Sin3-like 4 (SNL4) from Arabidopsis thaliana (Mouse-ear cress).